The chain runs to 171 residues: Peptide methionine sulfoxide reductase MsrA (171 aa).

Cys12 is a catalytic residue.

This sequence belongs to the MsrA Met sulfoxide reductase family.

The enzyme catalyses L-methionyl-[protein] + [thioredoxin]-disulfide + H2O = L-methionyl-(S)-S-oxide-[protein] + [thioredoxin]-dithiol. The catalysed reaction is [thioredoxin]-disulfide + L-methionine + H2O = L-methionine (S)-S-oxide + [thioredoxin]-dithiol. Its function is as follows. Has an important function as a repair enzyme for proteins that have been inactivated by oxidation. Catalyzes the reversible oxidation-reduction of methionine sulfoxide in proteins to methionine. The sequence is that of Peptide methionine sulfoxide reductase MsrA from Leuconostoc mesenteroides subsp. mesenteroides (strain ATCC 8293 / DSM 20343 / BCRC 11652 / CCM 1803 / JCM 6124 / NCDO 523 / NBRC 100496 / NCIMB 8023 / NCTC 12954 / NRRL B-1118 / 37Y).